The following is a 257-amino-acid chain: MMRWPWSSDSSDGPKPARHWNESLNKTDWEHYKEPRNWVPTAIATTTILAAVQFYRSYLRRIPGTNYIHPGFFRRRSLFGRVTSVGDGDNFHLFHTPGGRLAGWSWLRSIPTERKALKGKTIPVRIAGVDAPEAAHFGREAQPFSAEALEFLKSYILGRDVRTYIYRRDQYERVVGTVWVRRWLLRKDVGLEMIKRGLATVYDAKIGAEFGGLEEKYRAAEAKAKLKKLGMWGAKGKFESPRDYKNRHAATSESKLS.

A helical transmembrane segment spans residues 39-55 (VPTAIATTTILAAVQFY). The 159-residue stretch at 76 to 234 (RSLFGRVTSV…KLKKLGMWGA (159 aa)) folds into the TNase-like domain. Arginine 125 is a catalytic residue. Position 130 (aspartate 130) interacts with Ca(2+). Catalysis depends on residues glutamate 133 and arginine 173. The segment covering 236–246 (GKFESPRDYKN) has biased composition (basic and acidic residues). The interval 236 to 257 (GKFESPRDYKNRHAATSESKLS) is disordered.

It belongs to the LCL3 family.

The protein resides in the mitochondrion. It is found in the membrane. The sequence is that of Probable endonuclease LCL3 (LCL3) from Pyricularia oryzae (strain 70-15 / ATCC MYA-4617 / FGSC 8958) (Rice blast fungus).